A 558-amino-acid chain; its full sequence is Arginine--tRNA ligase (558 aa).

The 'HIGH' region signature appears at 119–129 (PNIAKPMSMGH).

Belongs to the class-I aminoacyl-tRNA synthetase family. Monomer.

It localises to the cytoplasm. It catalyses the reaction tRNA(Arg) + L-arginine + ATP = L-arginyl-tRNA(Arg) + AMP + diphosphate. This Lactobacillus johnsonii (strain CNCM I-12250 / La1 / NCC 533) protein is Arginine--tRNA ligase.